We begin with the raw amino-acid sequence, 1831 residues long: Transmembrane protein 131 homolog (1831 aa).

A signal peptide spans 1-29; it reads MVPSIHKTSNRYRTIYFFLISLLITSTFA. The Lumenal portion of the chain corresponds to 30–1169; the sequence is DQQAWPLPEE…QALPRPPFEN (1140 aa). The tract at residues 118–294 is papD-L domain; that stretch reads EMDPPMMDFG…QSKQIATLVL (177 aa). Residues 1170–1190 traverse the membrane as a helical segment; sequence IMYYSCVTALIFCLVCVLACA. Residues 1191-1831 lie on the Cytoplasmic side of the membrane; that stretch reads YLEGDRAIAV…TDNENDEKNN (641 aa). Residues 1223-1234 are compositionally biased toward low complexity; that stretch reads STTTPVPTVPST. Disordered stretches follow at residues 1223-1252, 1325-1516, 1663-1759, and 1800-1831; these read STTT…RPST, GQQK…PTDD, QMKR…VSNP, and WSSS…EKNN. Positions 1338–1349 are enriched in acidic residues; it reads PEFDEVEEEELA. 2 stretches are compositionally biased toward low complexity: residues 1394 to 1407 and 1435 to 1448; these read PIIV…PPVQ and QVPP…TPKT. Basic and acidic residues predominate over residues 1455 to 1467; sequence EPEKPIKPSEQKK. Residues 1480–1497 show a composition bias toward polar residues; it reads TPSKARTPSKTPSQSNRA. The segment covering 1500–1514 has biased composition (low complexity); sequence PASSPAPIAPTSAPT. Polar residues-rich tracts occupy residues 1669–1687, 1702–1733, and 1742–1758; these read SPSQ…SPQK, NQSS…NSIQ, and WGDN…TVSN. A compositionally biased stretch (low complexity) spans 1808-1820; it reads PPTQQPSTSQMPQ. Positions 1822 to 1831 are enriched in acidic residues; the sequence is TDNENDEKNN.

It belongs to the TMEM131 family. May interact (via PapD-L domain) with collagen proteins (via C-terminus); the interaction is direct and is involved in assembly and secretion of collagen. Predominantly expressed in the intestine and hypodermis.

Its subcellular location is the membrane. The protein resides in the endoplasmic reticulum membrane. Its function is as follows. Collagen binding transmembrane protein involved in collagen secretion, probably by recruiting the ER-to-Golgi transport complex TRAPPIII. Required for normal development. The polypeptide is Transmembrane protein 131 homolog (Caenorhabditis elegans).